The chain runs to 221 residues: Large ribosomal subunit protein uL1 (221 aa).

The protein belongs to the universal ribosomal protein uL1 family. In terms of assembly, part of the 50S ribosomal subunit.

In terms of biological role, probably involved in E site tRNA release. Binds directly to 23S rRNA. Protein L1 is also a translational repressor protein, it controls the translation of its operon by binding to its mRNA. This is Large ribosomal subunit protein uL1 from Sulfolobus acidocaldarius (strain ATCC 33909 / DSM 639 / JCM 8929 / NBRC 15157 / NCIMB 11770).